Here is a 461-residue protein sequence, read N- to C-terminus: Cytochrome c biogenesis protein CcsB (461 aa).

A run of 3 helical transmembrane segments spans residues 32–52, 91–111, and 178–198; these read LRLA…GTVI, TWWF…CTFT, and IGPI…IWGA.

The protein belongs to the Ccs1/CcsB family. In terms of assembly, may interact with CcsA.

The protein resides in the cellular thylakoid membrane. Required during biogenesis of c-type cytochromes (cytochrome c6 and cytochrome f) at the step of heme attachment. The sequence is that of Cytochrome c biogenesis protein CcsB from Trichormus variabilis (strain ATCC 29413 / PCC 7937) (Anabaena variabilis).